Here is a 315-residue protein sequence, read N- to C-terminus: Protoheme IX farnesyltransferase (315 aa).

The next 9 membrane-spanning stretches (helical) occupy residues 32 to 52, 53 to 73, 93 to 113, 120 to 140, 153 to 173, 180 to 200, 226 to 246, 249 to 269, and 295 to 315; these read VMSL…GHMN, PVLA…SGAL, IPAG…LSAF, LMVN…YAVI, IVIG…AATG, LVLF…LSLF, ALFY…MGFA, FYGV…WRLW, and IFAV…FGVF.

It belongs to the UbiA prenyltransferase family. Protoheme IX farnesyltransferase subfamily.

It localises to the cell inner membrane. The enzyme catalyses heme b + (2E,6E)-farnesyl diphosphate + H2O = Fe(II)-heme o + diphosphate. Its pathway is porphyrin-containing compound metabolism; heme O biosynthesis; heme O from protoheme: step 1/1. Converts heme B (protoheme IX) to heme O by substitution of the vinyl group on carbon 2 of heme B porphyrin ring with a hydroxyethyl farnesyl side group. This Brucella canis (strain ATCC 23365 / NCTC 10854 / RM-666) protein is Protoheme IX farnesyltransferase.